The primary structure comprises 120 residues: NAD(P)H-quinone oxidoreductase subunit 3, chloroplastic (120 aa).

The next 3 membrane-spanning stretches (helical) occupy residues 9 to 29 (IFWA…LISG), 64 to 84 (MFAL…PWAM), and 88 to 108 (VLGV…ILGL).

The protein belongs to the complex I subunit 3 family. NDH is composed of at least 16 different subunits, 5 of which are encoded in the nucleus.

It localises to the plastid. The protein resides in the chloroplast thylakoid membrane. It carries out the reaction a plastoquinone + NADH + (n+1) H(+)(in) = a plastoquinol + NAD(+) + n H(+)(out). The enzyme catalyses a plastoquinone + NADPH + (n+1) H(+)(in) = a plastoquinol + NADP(+) + n H(+)(out). NDH shuttles electrons from NAD(P)H:plastoquinone, via FMN and iron-sulfur (Fe-S) centers, to quinones in the photosynthetic chain and possibly in a chloroplast respiratory chain. The immediate electron acceptor for the enzyme in this species is believed to be plastoquinone. Couples the redox reaction to proton translocation, and thus conserves the redox energy in a proton gradient. This is NAD(P)H-quinone oxidoreductase subunit 3, chloroplastic from Aethionema grandiflorum (Persian stone-cress).